The chain runs to 227 residues: Lysosomal-associated transmembrane protein 4B (227 aa).

Helical transmembrane passes span 26 to 46 (ILLG…LLSA), 72 to 92 (MCIA…ATYG), 100 to 120 (WIIP…LVAI), and 153 to 173 (CLVL…GYLI). The segment at 205–222 (PPYDDATAVPSTAKEPPP) is required for NEDD4 interaction.

Belongs to the LAPTM4/LAPTM5 transporter family. Homooligomer; upon reaching the lysosomes. Interacts with MCOLN1. Interacts with NEDD4; may play a role in the lysosomal sorting of LAPTM4B; enhances HGS association with NEDD4; mediates inhibition of EGFR degradation. Interacts with PIP5K1C; promotes SNX5 association with LAPTM4B; kinase activity of PIP5K1C is required; interaction is regulated by phosphatidylinositol 4,5-bisphosphate generated by PIP5K1C. Interacts with HGS; promotes HGS ubiquitination. Interacts with SNX5. Interacts with SLC3A2 and SLC7A5; recruits SLC3A2 and SLC7A5 to lysosomes to promote leucine uptake into these organelles and is required for mTORC1 activation. Interacts with LRRC32; decreases TGFB1 production in regulatory T cells. Interacts with BECN1; competes with EGFR for LAPTM4B binding; regulates EGFR activity. Interacts with EGFR; positively correlates with EGFR activation. In terms of processing, undergoes proteolytic cleavage following delivery to the lysosomes. Ubiquitinated by NEDD4.

Its subcellular location is the endomembrane system. The protein localises to the late endosome membrane. It is found in the cell membrane. It localises to the cell projection. The protein resides in the lysosome membrane. Its subcellular location is the endosome membrane. The protein localises to the endosome. It is found in the multivesicular body membrane. It localises to the multivesicular body lumen. In terms of biological role, required for optimal lysosomal function. Blocks EGF-stimulated EGFR intraluminal sorting and degradation. Conversely by binding with the phosphatidylinositol 4,5-bisphosphate, regulates its PIP5K1C interaction, inhibits HGS ubiquitination and relieves LAPTM4B inhibition of EGFR degradation. Recruits SLC3A2 and SLC7A5 (the Leu transporter) to the lysosome, promoting entry of leucine and other essential amino acid (EAA) into the lysosome, stimulating activation of proton-transporting vacuolar (V)-ATPase protein pump (V-ATPase) and hence mTORC1 activation. Plays a role as negative regulator of TGFB1 production in regulatory T cells. Binds ceramide and facilitates its exit from late endosome in order to control cell death pathways. In Mus musculus (Mouse), this protein is Lysosomal-associated transmembrane protein 4B.